We begin with the raw amino-acid sequence, 419 residues long: Histidine--tRNA ligase (419 aa).

The protein belongs to the class-II aminoacyl-tRNA synthetase family.

It is found in the cytoplasm. The enzyme catalyses tRNA(His) + L-histidine + ATP = L-histidyl-tRNA(His) + AMP + diphosphate + H(+). In Pyrobaculum arsenaticum (strain DSM 13514 / JCM 11321 / PZ6), this protein is Histidine--tRNA ligase.